Consider the following 337-residue polypeptide: DNA-directed RNA polymerase subunit alpha (337 aa).

The tract at residues 1 to 226 (MLIAQRPTLT…ELFGLARELN (226 aa)) is alpha N-terminal domain (alpha-NTD). An alpha C-terminal domain (alpha-CTD) region spans residues 243-337 (LAADLALEIE…DTSFAEDEQL (95 aa)). Residues 315-337 (FDPSAVVNDFEDDDTSFAEDEQL) form a disordered region. Over residues 323-337 (DFEDDDTSFAEDEQL) the composition is skewed to acidic residues.

Belongs to the RNA polymerase alpha chain family. Homodimer. The RNAP catalytic core consists of 2 alpha, 1 beta, 1 beta' and 1 omega subunit. When a sigma factor is associated with the core the holoenzyme is formed, which can initiate transcription.

It catalyses the reaction RNA(n) + a ribonucleoside 5'-triphosphate = RNA(n+1) + diphosphate. In terms of biological role, DNA-dependent RNA polymerase catalyzes the transcription of DNA into RNA using the four ribonucleoside triphosphates as substrates. The polypeptide is DNA-directed RNA polymerase subunit alpha (Kineococcus radiotolerans (strain ATCC BAA-149 / DSM 14245 / SRS30216)).